Consider the following 80-residue polypeptide: Exodeoxyribonuclease 7 small subunit (80 aa).

It belongs to the XseB family. Heterooligomer composed of large and small subunits.

It is found in the cytoplasm. The enzyme catalyses Exonucleolytic cleavage in either 5'- to 3'- or 3'- to 5'-direction to yield nucleoside 5'-phosphates.. Its function is as follows. Bidirectionally degrades single-stranded DNA into large acid-insoluble oligonucleotides, which are then degraded further into small acid-soluble oligonucleotides. The protein is Exodeoxyribonuclease 7 small subunit of Escherichia coli (strain SE11).